Here is a 228-residue protein sequence, read N- to C-terminus: Casparian strip membrane protein 2 (228 aa).

Residues 1 to 65 (MSTSDAAATV…FRRADRGSRC (65 aa)) lie on the Cytoplasmic side of the membrane. Residues 66–86 (VALLDLVLRVAAFGPALAAAI) form a helical membrane-spanning segment. At 87 to 113 (ATGTSDETLSVFTQFFQFHARFDDFPA) the chain is on the extracellular side. Residues 114–134 (LLFFMVANAIAAGYLVLSLPF) form a helical membrane-spanning segment. The Cytoplasmic segment spans residues 135-149 (SAVVVLRPQAIGLRH). Residues 150 to 170 (LLLICDLIIAALLTAAAAAAA) traverse the membrane as a helical segment. At 171 to 201 (AIVDLAHSGNQRANWVPICMQFHGFCQRTSG) the chain is on the extracellular side. The helical transmembrane segment at 202 to 222 (AVVASFLAVLVLLFLVILAAF) threads the bilayer. Over 223–228 (TIRKRC) the chain is Cytoplasmic.

It belongs to the Casparian strip membrane proteins (CASP) family. As to quaternary structure, homodimer and heterodimers.

The protein localises to the cell membrane. Functionally, regulates membrane-cell wall junctions and localized cell wall deposition. Required for establishment of the Casparian strip membrane domain (CSD) and the subsequent formation of Casparian strips, a cell wall modification of the root endodermis that determines an apoplastic barrier between the intraorganismal apoplasm and the extraorganismal apoplasm and prevents lateral diffusion. In Zea mays (Maize), this protein is Casparian strip membrane protein 2.